Here is a 383-residue protein sequence, read N- to C-terminus: Acetylornithine deacetylase (383 aa).

His-80 lines the Zn(2+) pocket. The active site involves Asp-82. Asp-112 is a Zn(2+) binding site. Residue Glu-144 is part of the active site. Residues Glu-145, Glu-169, and His-355 each coordinate Zn(2+).

It belongs to the peptidase M20A family. ArgE subfamily. Homodimer. Requires Zn(2+) as cofactor. Co(2+) is required as a cofactor. Glutathione serves as cofactor.

The protein resides in the cytoplasm. The catalysed reaction is N(2)-acetyl-L-ornithine + H2O = L-ornithine + acetate. The protein operates within amino-acid biosynthesis; L-arginine biosynthesis; L-ornithine from N(2)-acetyl-L-ornithine (linear): step 1/1. Functionally, catalyzes the hydrolysis of the amide bond of N(2)-acetylated L-amino acids. Cleaves the acetyl group from N-acetyl-L-ornithine to form L-ornithine, an intermediate in L-arginine biosynthesis pathway, and a branchpoint in the synthesis of polyamines. The chain is Acetylornithine deacetylase from Shigella boydii serotype 4 (strain Sb227).